Here is a 637-residue protein sequence, read N- to C-terminus: Nuclear receptor subfamily 2 group C member 1-B (637 aa).

Residues 149 to 224 constitute a DNA-binding region (nuclear receptor); the sequence is VELCVVCGDK…LGMKQDSVQC (76 aa). NR C4-type zinc fingers lie at residues 152–172 and 188–207; these read CVVC…CEGC and CRGS…CQYC. The 242-residue stretch at 383–624 folds into the NR LBD domain; it reads CVGSGSNLLP…SIIPYILRME (242 aa).

Belongs to the nuclear hormone receptor family. NR2 subfamily.

The protein localises to the nucleus. Its function is as follows. Orphan nuclear receptor. Binds the IR7 element in the promoter of its own gene in an autoregulatory negative feedback mechanism. Primarily repressor of a broad range of genes. Binds to hormone response elements (HREs) consisting of two 5'-AGGTCA-3' half site direct repeat consensus sequences. In Xenopus laevis (African clawed frog), this protein is Nuclear receptor subfamily 2 group C member 1-B (nr2c1-b).